The primary structure comprises 219 residues: Probable nicotinate-nucleotide adenylyltransferase (219 aa).

It belongs to the NadD family.

It carries out the reaction nicotinate beta-D-ribonucleotide + ATP + H(+) = deamido-NAD(+) + diphosphate. It functions in the pathway cofactor biosynthesis; NAD(+) biosynthesis; deamido-NAD(+) from nicotinate D-ribonucleotide: step 1/1. Its function is as follows. Catalyzes the reversible adenylation of nicotinate mononucleotide (NaMN) to nicotinic acid adenine dinucleotide (NaAD). This is Probable nicotinate-nucleotide adenylyltransferase from Pseudomonas entomophila (strain L48).